A 58-amino-acid chain; its full sequence is Large ribosomal subunit protein uL30 (58 aa).

The protein belongs to the universal ribosomal protein uL30 family. In terms of assembly, part of the 50S ribosomal subunit.

The polypeptide is Large ribosomal subunit protein uL30 (Parabacteroides distasonis (strain ATCC 8503 / DSM 20701 / CIP 104284 / JCM 5825 / NCTC 11152)).